The sequence spans 663 residues: Spore germination protein GerIA (663 aa).

A compositionally biased stretch (basic residues) spans 1-13 (MIWNWLRKKKKSN). Residues 1–175 (MIWNWLRKKK…SGGNSIYDFT (175 aa)) are disordered. The segment covering 47–56 (KNNEQKDSSQ) has biased composition (basic and acidic residues). Composition is skewed to low complexity over residues 57–72 (DKQQSAKQGDSSQDKQ), 88–101 (PKQGDSSQDKQQSA), and 122–150 (DKQQSAKQGDSSQDKQQSAKQGDSSQDKQ). The next 5 helical transmembrane spans lie at 414–434 (IFVDGSPSVLLTPVSYFDFFI), 451–471 (ILRLIAVLFSICATPLYVAVL), 491–511 (AQVPFPPLIEALFLELAIDLL), 541–561 (AGLTSNILLIIVALSALASFI), and 578–598 (FLAFAEIGGLFGISLGFIFLF).

Belongs to the GerABKA family.

Its subcellular location is the cell membrane. Its function is as follows. Required for inosine germination. The polypeptide is Spore germination protein GerIA (gerIA) (Bacillus cereus).